We begin with the raw amino-acid sequence, 95 residues long: Protein E7 (95 aa).

The E7 terminal domain stretch occupies residues 1 to 40 (MIGKEATIPDIVLELQQLVQPTDLHCYEELSEEETETEEE). The short motif at 24 to 28 (LHCYE) is the LXCXE motif; interaction with host RB1 and TMEM173/STING element. A zinc finger lies at 52–88 (CCFCGSKLRLIVLATHAGIRSQEELLLGEVQLVCPNC). The Nuclear export signal signature appears at 70–78 (IRSQEELLL).

It belongs to the papillomaviridae E7 protein family. As to quaternary structure, homodimer. Homooligomer. Interacts with host RB1; this interaction induces dissociation of RB1-E2F1 complex thereby disrupting RB1 activity. Interacts with host EP300; this interaction represses EP300 transcriptional activity. Interacts with protein E2; this interaction inhibits E7 oncogenic activity. Interacts with host TMEM173/STING; this interaction impairs the ability of TMEM173/STING to sense cytosolic DNA and promote the production of type I interferon (IFN-alpha and IFN-beta). Post-translationally, highly phosphorylated.

The protein resides in the host cytoplasm. It is found in the host nucleus. Its function is as follows. Plays a role in viral genome replication by driving entry of quiescent cells into the cell cycle. Stimulation of progression from G1 to S phase allows the virus to efficiently use the cellular DNA replicating machinery to achieve viral genome replication. E7 protein has both transforming and trans-activating activities. Induces the disassembly of the E2F1 transcription factor from RB1, with subsequent transcriptional activation of E2F1-regulated S-phase genes. Interferes with host histone deacetylation mediated by HDAC1 and HDAC2, leading to transcription activation. Also plays a role in the inhibition of both antiviral and antiproliferative functions of host interferon alpha. Interaction with host TMEM173/STING impairs the ability of TMEM173/STING to sense cytosolic DNA and promote the production of type I interferon (IFN-alpha and IFN-beta). In Human papillomavirus 17, this protein is Protein E7.